The primary structure comprises 1614 residues: Protein scribble homolog (1614 aa).

The tract at residues Met-1–Glu-809 is sufficient for targeting to adherens junction and to inhibit cell proliferation. LRR repeat units lie at residues Asn-11–Tyr-34, Ser-35–Leu-58, Leu-59–Phe-81, Gln-83–Lys-105, Leu-107–Leu-127, Arg-128–Leu-150, Ala-151–Leu-173, Val-174–Leu-196, Pro-197–Leu-219, Arg-221–Leu-242, Leu-243–Leu-265, Gln-267–Cys-288, Glu-289–Leu-311, Thr-312–Cys-334, Ala-336–Thr-357, Glu-359–Leu-380, and Leu-382–Gln-405. Residue Ser-37 is modified to Phosphoserine. A Phosphothreonine modification is found at Thr-378. 3 disordered regions span residues Pro-417–Pro-441, Gly-462–Arg-608, and Ala-636–Ala-692. Polar residues predominate over residues Gly-428–Trp-437. A Phosphothreonine modification is found at Thr-475. Residues Ser-479–Glu-494 show a composition bias toward basic and acidic residues. The segment covering Thr-516 to Gln-533 has biased composition (polar residues). Positions Gln-548–Glu-557 are enriched in low complexity. The segment covering Glu-662–Glu-686 has biased composition (acidic residues). Positions Glu-664–Ser-691 form a coiled coil. Residues Ser-699 and Ser-755 each carry the phosphoserine modification. The interaction with ARHGEF7 stretch occupies residues Ile-708–Arg-1219. In terms of domain architecture, PDZ 1 spans Thr-719–Arg-806. Residues Thr-719 to Thr-1184 are required for interaction with VIM. The residue at position 817 (Thr-817) is a Phosphothreonine. Phosphoserine occurs at positions 826, 866, and 930. One can recognise a PDZ 2 domain in the interval Val-853–Ala-941. The tract at residues Glu-940–Glu-971 is disordered. Over residues Pro-944 to Thr-959 the composition is skewed to pro residues. The segment covering Ala-960–Pro-969 has biased composition (low complexity). PDZ domains are found at residues Glu-994 to Pro-1083 and Glu-1090 to Val-1178. Phosphoserine is present on residues Ser-1130, Ser-1210, Ser-1213, Ser-1216, Ser-1222, Ser-1260, Ser-1268, and Ser-1271. A disordered region spans residues Val-1214–Glu-1448. Positions Ile-1217 to Pro-1232 are enriched in basic and acidic residues. Thr-1304 carries the phosphothreonine modification. Ser-1310 carries the post-translational modification Phosphoserine. A compositionally biased stretch (basic and acidic residues) spans Ser-1315 to Val-1327. Phosphoserine is present on Ser-1340. Residues Leu-1341–Glu-1368 adopt a coiled-coil conformation. The span at Asp-1345 to Lys-1357 shows a compositional bias: basic and acidic residues. The segment covering Leu-1378–Glu-1390 has biased composition (acidic residues). The segment covering Gly-1396–Pro-1408 has biased composition (low complexity). Phosphoserine occurs at positions 1402 and 1405. Residues Ala-1418–Arg-1429 are compositionally biased toward basic and acidic residues. A phosphoserine mark is found at Ser-1432, Ser-1445, and Ser-1467. A disordered region spans residues Gln-1476 to Leu-1524. Basic and acidic residues predominate over residues Gln-1483–Ala-1496. Ser-1500 bears the Phosphoserine mark. Residue Thr-1504 is modified to Phosphothreonine. Phosphoserine is present on residues Ser-1506, Ser-1520, and Ser-1550. Positions Gly-1581–Ser-1614 are disordered.

This sequence belongs to the LAP (LRR and PDZ) protein family. Interacts with UBE3A. Interacts with PAK1 and PAK2. Interacts (via PDZ domains) with VANGL2. Interacts (via PDZ domains) with LPP and TRIP6; the interaction is direct. Interacts (via PDZ domains) with TJP2. Interacts (via PDZ domains) with APC; may mediate APC targeting to adherens junctions of epithelial cells. Interacts (via PDZ domains) with TSHR; regulates TSHR trafficking and function. Interacts with ARHGEF7 and GIT1; interacts directly with ARHGEF7. Interacts with CTNNB1. Interacts with MAPK12. Interacts (via PDZ domains 1 and 3) with MCC. Interacts with DLG5. Interacts with STK4/MST1 and LATS1 in the presence of DLG5. Interacts (via PDZ domain 3) with CRTAM (via PDZ-binding motif); the interaction promotes CRTAM and SCRIB polarization in a subset of CD4+ T-cells. Interacts with YES1, when YES1 is in a closed conformation; the interaction facilitates YES1 autophosphorylation. Interacts (via PDZ domains) with VIM; the interaction protects SCRIB from proteasomal degradation and facilitates SCRIB localization to intermediate filaments, the interaction is reduced by cell contact inhibition. Ubiquitinated; targeted for UBE3A-dependent multiubiquitination and degraded. In terms of processing, palmitoylated. Could be depalmitoylated by LYPLA1 and/or LYPLA2. Palmitoylation of SCRIB by ZDHHC7 is required for its localization to cell-cell junctions, function in the establishement of epithelial cell polarity and the regulation of downstream signaling pathways important for epithelial cell differentiation.

The protein localises to the cell membrane. Its subcellular location is the cell junction. The protein resides in the adherens junction. It is found in the cell projection. It localises to the lamellipodium. The protein localises to the cytoplasm. Its subcellular location is the postsynapse. The protein resides in the presynapse. In terms of biological role, scaffold protein involved in different aspects of polarized cell differentiation regulating epithelial and neuronal morphogenesis and T-cell polarization. Via its interaction with CRTAM, required for the late phase polarization of a subset of CD4+ T-cells, which in turn regulates TCR-mediated proliferation and IFNG and IL22 production. Plays a role in cell directional movement, cell orientation, cell sheet organization and Golgi complex polarization at the cell migration front. Promotes epithelial cell layer barrier function via maintaining cell-cell adhesion. Most probably functions in the establishment of apico-basal cell polarity. May function in cell proliferation regulating progression from G1 to S phase and as a positive regulator of apoptosis for instance during acinar morphogenesis of the mammary epithelium. May regulate cell invasion via MAPK-mediated cell migration and adhesion. May play a role in exocytosis and in the targeting of synaptic vesicles to synapses. Functions as an activator of Rac GTPase activity. The protein is Protein scribble homolog of Canis lupus familiaris (Dog).